Here is a 334-residue protein sequence, read N- to C-terminus: MADAGIPDEILYSDISDDEIIIDGDGDSSGDEDDDDGGLTRQAAARIVTDLGFEVLQPLQSGSEGRVFVARRPGEADTVVLKVGQKPSTLMEGMLLQRLSHDNVMRMKQMLARGPATCLVLPHFRCDLYSYLTMRDGPLDMRDAGCVIRAVLRGLAYLHGMRIMHRDVKAENIFLEDVDTVCLGDLGAARCNVAAPNFYGLAGTIETNAPEVLARDRYDTKVDVWGAGVVLFETLAYPKTITGGDEPAINGEMHLIDLIRALGVHPEEFPPDTRLRSEFVRYAGTHRQPYTQYARVARLGLPETGAFLIYKMLTFDPVRRPSADEILNFGMWTV.

A Protein kinase domain is found at 53–333 (FEVLQPLQSG…DEILNFGMWT (281 aa)). ATP is bound by residues 59-67 (LQSGSEGRV) and Lys-82. Asp-167 serves as the catalytic Proton acceptor.

The protein belongs to the protein kinase superfamily. Ser/Thr protein kinase family.

The catalysed reaction is L-seryl-[protein] + ATP = O-phospho-L-seryl-[protein] + ADP + H(+). It catalyses the reaction L-threonyl-[protein] + ATP = O-phospho-L-threonyl-[protein] + ADP + H(+). Its function is as follows. Able to phosphorylate in vitro the major virion phosphoprotein phosphorylated in vivo. The chain is Serine/threonine-protein kinase (PK) from Sus scrofa (Pig).